The sequence spans 181 residues: Crossover junction endodeoxyribonuclease RuvC (181 aa).

Active-site residues include Asp-7, Glu-67, and Asp-139. 3 residues coordinate Mg(2+): Asp-7, Glu-67, and Asp-139.

Belongs to the RuvC family. As to quaternary structure, homodimer which binds Holliday junction (HJ) DNA. The HJ becomes 2-fold symmetrical on binding to RuvC with unstacked arms; it has a different conformation from HJ DNA in complex with RuvA. In the full resolvosome a probable DNA-RuvA(4)-RuvB(12)-RuvC(2) complex forms which resolves the HJ. Mg(2+) is required as a cofactor.

It is found in the cytoplasm. It carries out the reaction Endonucleolytic cleavage at a junction such as a reciprocal single-stranded crossover between two homologous DNA duplexes (Holliday junction).. The RuvA-RuvB-RuvC complex processes Holliday junction (HJ) DNA during genetic recombination and DNA repair. Endonuclease that resolves HJ intermediates. Cleaves cruciform DNA by making single-stranded nicks across the HJ at symmetrical positions within the homologous arms, yielding a 5'-phosphate and a 3'-hydroxyl group; requires a central core of homology in the junction. The consensus cleavage sequence is 5'-(A/T)TT(C/G)-3'. Cleavage occurs on the 3'-side of the TT dinucleotide at the point of strand exchange. HJ branch migration catalyzed by RuvA-RuvB allows RuvC to scan DNA until it finds its consensus sequence, where it cleaves and resolves the cruciform DNA. This is Crossover junction endodeoxyribonuclease RuvC from Cupriavidus necator (strain ATCC 17699 / DSM 428 / KCTC 22496 / NCIMB 10442 / H16 / Stanier 337) (Ralstonia eutropha).